Reading from the N-terminus, the 183-residue chain is SsrA-binding protein (183 aa).

A disordered region spans residues 1–27 (MAKKATLVDHGAAKGKKKAQSKVSKKN). Positions 13 to 27 (AKGKKKAQSKVSKKN) are enriched in basic residues.

Belongs to the SmpB family.

The protein localises to the cytoplasm. Functionally, required for rescue of stalled ribosomes mediated by trans-translation. Binds to transfer-messenger RNA (tmRNA), required for stable association of tmRNA with ribosomes. tmRNA and SmpB together mimic tRNA shape, replacing the anticodon stem-loop with SmpB. tmRNA is encoded by the ssrA gene; the 2 termini fold to resemble tRNA(Ala) and it encodes a 'tag peptide', a short internal open reading frame. During trans-translation Ala-aminoacylated tmRNA acts like a tRNA, entering the A-site of stalled ribosomes, displacing the stalled mRNA. The ribosome then switches to translate the ORF on the tmRNA; the nascent peptide is terminated with the 'tag peptide' encoded by the tmRNA and targeted for degradation. The ribosome is freed to recommence translation, which seems to be the essential function of trans-translation. In Corynebacterium kroppenstedtii (strain DSM 44385 / JCM 11950 / CIP 105744 / CCUG 35717), this protein is SsrA-binding protein.